The following is a 70-amino-acid chain: Beta-defensin 131B (70 aa).

Positions 1–22 (MRVLFFVFGVLSLMSTVPPTRS) are cleaved as a signal peptide. 3 disulfide bridges follow: Cys29-Cys56, Cys36-Cys50, and Cys40-Cys57.

The protein belongs to the beta-defensin family.

It localises to the secreted. Functionally, has antibacterial activity. The chain is Beta-defensin 131B from Homo sapiens (Human).